The primary structure comprises 100 residues: Small ribosomal subunit protein uS14c (100 aa).

This sequence belongs to the universal ribosomal protein uS14 family. Part of the 30S ribosomal subunit.

Its subcellular location is the plastid. It is found in the chloroplast. In terms of biological role, binds 16S rRNA, required for the assembly of 30S particles. The sequence is that of Small ribosomal subunit protein uS14c from Chlorokybus atmophyticus (Soil alga).